The following is a 151-amino-acid chain: tRNA-specific adenosine deaminase (151 aa).

In terms of domain architecture, CMP/dCMP-type deaminase spans 4 to 122 (NRDSYWMKIA…PFLKKIFINL (119 aa)). His-55 is a Zn(2+) binding site. The active-site Proton donor is Glu-57. Positions 85 and 88 each coordinate Zn(2+).

It belongs to the cytidine and deoxycytidylate deaminase family. As to quaternary structure, homodimer. Zn(2+) is required as a cofactor.

The enzyme catalyses adenosine(34) in tRNA + H2O + H(+) = inosine(34) in tRNA + NH4(+). Catalyzes the deamination of adenosine to inosine at the wobble position 34 of tRNA(Arg2). In Buchnera aphidicola subsp. Schizaphis graminum (strain Sg), this protein is tRNA-specific adenosine deaminase.